The chain runs to 463 residues: Glucagon-like peptide 1 receptor (463 aa).

The signal sequence occupies residues 1 to 21 (MAVTPSLLRLALLLLGAVGRA). At 22-139 (GPRPQGATVS…KQGERNSPEE (118 aa)) the chain is on the extracellular side. 3 disulfide bridges follow: Cys-46-Cys-71, Cys-62-Cys-104, and Cys-85-Cys-126. 3 N-linked (GlcNAc...) asparagine glycosylation sites follow: Asn-63, Asn-82, and Asn-115. Residues 140–164 (QLLSLYIIYTVGYALSFSALVIASA) form a helical membrane-spanning segment. The Cytoplasmic segment spans residues 165-175 (ILVSFRHLHCT). The helical transmembrane segment at 176–201 (RNYIHLNLFASFILRALSVFIKDAAL) threads the bilayer. Residues 202-227 (KWMYSTAAQQHQWDGLLSYQDSLGCR) are Extracellular-facing. Residues Cys-226 and Cys-296 are joined by a disulfide bond. A helical transmembrane segment spans residues 228-251 (LVFLLMQYCVAANYYWLLVEGVYL). The Cytoplasmic portion of the chain corresponds to 252–265 (YTLLAFSVFSEQRI). A helical membrane pass occupies residues 266–290 (FKLYLSIGWGVPLLFVIPWGIVKYL). Residues 291–305 (YEDEGCWTRNSNMNY) lie on the Extracellular side of the membrane. A helical membrane pass occupies residues 306–328 (WLIIRLPILFAIGVNFLVFIRVI). Over 329 to 348 (CIVIAKLKANLMCKTDIKCR) the chain is Cytoplasmic. At Cys-341 the chain carries ADP-ribosylcysteine. Arg-348 carries the post-translational modification ADP-ribosylarginine. The helical transmembrane segment at 349 to 370 (LAKSTLTLIPLLGTHEVIFAFV) threads the bilayer. An important for allosteric inhibitor binding region spans residues 352–355 (STLT). The Extracellular portion of the chain corresponds to 371 to 383 (MDEHARGTLRFVK). A helical membrane pass occupies residues 384–404 (LFTELSFTSFQGFMVAVLYCF). The Cytoplasmic segment spans residues 405 to 463 (VNNEVQMEFRKSWERWRLERLNIQRDSSMKPLKCPTSSVSSGATVGSSVYAATCQNSCS).

Belongs to the G-protein coupled receptor 2 family. May form homodimers and heterodimers with GIPR. N-glycosylation enhances cell surface expression and lengthens receptor half-life by preventing degradation in the ER. In terms of tissue distribution, pancreatic islets, stomach, lung, rat insulinoma cell line.

It localises to the cell membrane. In terms of biological role, G-protein coupled receptor for glucagon-like peptide 1 (GLP-1). Ligand binding triggers activation of a signaling cascade that leads to the activation of adenylyl cyclase and increased intracellular cAMP levels. Plays a role in regulating insulin secretion in response to GLP-1. In Rattus norvegicus (Rat), this protein is Glucagon-like peptide 1 receptor (Glp1r).